The primary structure comprises 356 residues: Phosphoserine aminotransferase (356 aa).

Arg41 is a binding site for L-glutamate. Residues 76–77 (AS), Trp102, Thr150, Asp169, and Gln192 contribute to the pyridoxal 5'-phosphate site. Residue Lys193 is modified to N6-(pyridoxal phosphate)lysine. 234 to 235 (NT) contributes to the pyridoxal 5'-phosphate binding site.

This sequence belongs to the class-V pyridoxal-phosphate-dependent aminotransferase family. SerC subfamily. In terms of assembly, homodimer. It depends on pyridoxal 5'-phosphate as a cofactor.

It is found in the cytoplasm. It catalyses the reaction O-phospho-L-serine + 2-oxoglutarate = 3-phosphooxypyruvate + L-glutamate. The enzyme catalyses 4-(phosphooxy)-L-threonine + 2-oxoglutarate = (R)-3-hydroxy-2-oxo-4-phosphooxybutanoate + L-glutamate. Its pathway is amino-acid biosynthesis; L-serine biosynthesis; L-serine from 3-phospho-D-glycerate: step 2/3. The protein operates within cofactor biosynthesis; pyridoxine 5'-phosphate biosynthesis; pyridoxine 5'-phosphate from D-erythrose 4-phosphate: step 3/5. Catalyzes the reversible conversion of 3-phosphohydroxypyruvate to phosphoserine and of 3-hydroxy-2-oxo-4-phosphonooxybutanoate to phosphohydroxythreonine. The polypeptide is Phosphoserine aminotransferase (Flavobacterium johnsoniae (strain ATCC 17061 / DSM 2064 / JCM 8514 / BCRC 14874 / CCUG 350202 / NBRC 14942 / NCIMB 11054 / UW101) (Cytophaga johnsonae)).